A 608-amino-acid chain; its full sequence is Malonate--CoA ligase (608 aa).

Belongs to the ATP-dependent AMP-binding enzyme family. Expressed in flowers.

It localises to the cytoplasm. The protein localises to the nucleus. The enzyme catalyses malonate + ATP + CoA = malonyl-CoA + AMP + diphosphate. Malonate--CoA ligase that catalyzes the formation of malonyl-CoA directly from malonate and CoA. May be required for the detoxification of malonate. This Arabidopsis thaliana (Mouse-ear cress) protein is Malonate--CoA ligase (AAE13).